Consider the following 395-residue polypeptide: MEEAVESPEVKEFEYFSDAVFIPKDGNTLSVGVIKRIETAVKEGEVVKVVSIVKEIIQNVSRNKIKIAVTGDSGNGMSSFINALRLIGHEEKDSAPTGVVRTTQKPTCYFSSHFPYVELWDLPGLGATAQSVESYLEEMQISIYDLIIIVASEQFSLNHVKLAITMQRMRKRFYVVWTKLDRDLSTSTFPEPQLLQSIQRNIRDSLQKEKVKEHPMFLVSVFKPESHDFPKLRETLQKDLPVIKYHGLVETLYQVCEKTVNERVESIKKSIDEDNLHTEFGISDPGNAIEIRKAFQKTFGLDDISLHLVALEMKNKHFNTSMESQETQRYQQDDWVLARLYRTGTRVGSIGFDYMKCCFTSHHSRCKQQKDILDETAAKAKEVLLKILRLSIPHP.

In terms of domain architecture, IRG-type G spans 63–239; that stretch reads NKIKIAVTGD…PKLRETLQKD (177 aa). GTP-binding positions include 72–79, 97–101, and 179–181; these read DSGNGMSS, TGVVR, and KLD.

The protein belongs to the TRAFAC class dynamin-like GTPase superfamily. IRG family. Ubiquitinated; polyubiquitinated in the cytosol, promoting Gbp1 recruitment to the T.gondii parasitophorous vacuole membranes.

It is found in the cytoplasmic vesicle membrane. The protein resides in the golgi apparatus membrane. It localises to the cytoplasm. Its subcellular location is the cytosol. The catalysed reaction is GTP + H2O = GDP + phosphate + H(+). Functionally, immunity-related GTPase that plays important roles in innate immunity and inflammatory response. Acts as a dynamin-like protein that binds to intracellular membranes and promotes remodeling and trafficking of those membranes. Required for clearance of acute protozoan and bacterial infections. Acts by participating to Tgtp1/Irgb6 and Gbp1-mediated parasite killing by promoting their accumulation on the T.gondii parasitophorous vacuole membranes. Also required for prolonged loading of ubiquitin and p62/Sqstm1 to parasitophorous vacuole membranes. Also acts as a key negative regulator of the inflammatory response by inhibiting the non-canonical inflammasome, thereby protecting against Casp11-driven septic shock during endotoxemia. The protein is Immunity-related GTPase family M protein 2 of Mus musculus (Mouse).